The sequence spans 439 residues: Branched-chain amino acid permease BrnQ (439 aa).

At 1–9 the chain is on the cytoplasmic side; that stretch reads MTHQLKSRD. The helical transmembrane segment at 10-30 threads the bilayer; that stretch reads IIALGFMTFALFVGAGNIIFP. Topologically, residues 31-43 are periplasmic; sequence PMVGLQAGEHVWT. A helical membrane pass occupies residues 44-64; that stretch reads AAIGFLITAVGLPVLTVVALA. Topologically, residues 65-79 are cytoplasmic; that stretch reads KVGGGVDSLSTPIGK. A helical membrane pass occupies residues 80–100; it reads VAGLLLATVCYLAVGPLFATP. Residues 101-118 lie on the Periplasmic side of the membrane; the sequence is RTATVSFEVGIAPLTGDS. Residues 119–139 traverse the membrane as a helical segment; that stretch reads AMPLLIYSVVYFAIVILVSLY. Over 140–149 the chain is Cytoplasmic; sequence PGKLLDTVGN. A helical transmembrane segment spans residues 150–170; that stretch reads FLAPLKIIALVILSVAAIVWP. At 171–189 the chain is on the periplasmic side; the sequence is AGPISNALDAYQNAAFSNG. A helical transmembrane segment spans residues 190-210; it reads FVNGYLTMDTLGAMVFGIVIV. The Cytoplasmic portion of the chain corresponds to 211–226; sequence NAARSRGVTEARLLTR. A helical transmembrane segment spans residues 227–247; that stretch reads YTVWAGLMAGVGLTLLYLALF. Residues 248-277 are Periplasmic-facing; sequence RLGSDSATLVDQSANGAAILHAYVQHTFGG. The chain crosses the membrane as a helical span at residues 278-298; it reads AGSFLLAALIFIACLVTAVGL. Topologically, residues 299–316 are cytoplasmic; the sequence is TCACAEFFAQYIPLSYRT. A helical membrane pass occupies residues 317–337; it reads LVFILGGFSMVVSNLGLSHLI. A topological domain (periplasmic) is located at residue Gln-338. A helical membrane pass occupies residues 339–359; it reads ISIPVLTAIYPPCIALVVLSF. Residues 360-369 lie on the Cytoplasmic side of the membrane; that stretch reads TRSWWHNSTR. Residues 370–390 traverse the membrane as a helical segment; sequence IIAPAMFISLLFGILDGIKAS. At 391-404 the chain is on the periplasmic side; sequence AFGDMLPAWSQRLP. The helical transmembrane segment at 405-425 threads the bilayer; it reads LAEQGLAWLMPTVVMVILAII. Residues 426-439 lie on the Cytoplasmic side of the membrane; that stretch reads WDRAAGRQVTSSAH.

This sequence belongs to the branched chain amino acid transporter family.

Its subcellular location is the cell inner membrane. In terms of biological role, liv-II branched chain amino acid transport system, which transports leucine, valine and isoleucine. The protein is Branched-chain amino acid permease BrnQ of Salmonella typhimurium (strain LT2 / SGSC1412 / ATCC 700720).